Reading from the N-terminus, the 245-residue chain is rRNA adenine N-6-methyltransferase (245 aa).

Residues asparagine 10, leucine 12, glycine 37, glutamate 58, aspartate 83, and asparagine 100 each contribute to the S-adenosyl-L-methionine site.

The protein belongs to the class I-like SAM-binding methyltransferase superfamily. rRNA adenine N(6)-methyltransferase family.

The catalysed reaction is adenosine(2085) in 23S rRNA + 2 S-adenosyl-L-methionine = N(6)-dimethyladenosine(2085) in 23S rRNA + 2 S-adenosyl-L-homocysteine + 2 H(+). This protein produces a dimethylation of the adenine residue at position 2085 in 23S rRNA, resulting in reduced affinity between ribosomes and macrolide-lincosamide-streptogramin B antibiotics. This chain is rRNA adenine N-6-methyltransferase (ermB), found in Enterococcus faecalis (strain ATCC 700802 / V583).